A 322-amino-acid polypeptide reads, in one-letter code: uncharacterized protein (322 aa).

Basic residues-rich tracts occupy residues 1-16 (MPGN…KSGT) and 43-61 (LRPH…RRPV). A disordered region spans residues 1-69 (MPGNSRRRGA…PVKRADETET (69 aa)). The S-adenosyl-L-methionine site is built by G261, I281, and L290.

Belongs to the class IV-like SAM-binding methyltransferase superfamily. RNA methyltransferase TrmH family.

This is an uncharacterized protein from Mycobacterium bovis (strain BCG / Pasteur 1173P2).